Reading from the N-terminus, the 277-residue chain is NLP effector protein Pc109095 (277 aa).

The N-terminal stretch at 1-19 is a signal peptide; that stretch reads MKFIFAFVLCLAVAQTALG. The Hepta-peptide GHRHDWE motif signature appears at 119–125; the sequence is RSRHLWA. A glycan (N-linked (GlcNAc...) asparagine) is linked at asparagine 199.

Belongs to the Necrosis inducing protein (NPP1) family.

It is found in the secreted. In terms of biological role, secreted effector that contributes strongly to virulence during infection by P.capsici. This Phytophthora capsici protein is NLP effector protein Pc109095.